We begin with the raw amino-acid sequence, 415 residues long: CCA-adding enzyme (415 aa).

The ATP site is built by Ser52 and Arg55. Residues Ser52 and Arg55 each contribute to the CTP site. Mg(2+) is bound by residues Asp64, Asp66, and Asp116. 3 residues coordinate ATP: His139, Lys159, and Tyr168. Residues His139, Lys159, and Tyr168 each contribute to the CTP site.

The protein belongs to the tRNA nucleotidyltransferase/poly(A) polymerase family. Archaeal CCA-adding enzyme subfamily. As to quaternary structure, homodimer. The cofactor is Mg(2+).

It catalyses the reaction a tRNA precursor + 2 CTP + ATP = a tRNA with a 3' CCA end + 3 diphosphate. The enzyme catalyses a tRNA with a 3' CCA end + 2 CTP + ATP = a tRNA with a 3' CCACCA end + 3 diphosphate. Its function is as follows. Catalyzes the addition and repair of the essential 3'-terminal CCA sequence in tRNAs without using a nucleic acid template. Adds these three nucleotides in the order of C, C, and A to the tRNA nucleotide-73, using CTP and ATP as substrates and producing inorganic pyrophosphate. tRNA 3'-terminal CCA addition is required both for tRNA processing and repair. Also involved in tRNA surveillance by mediating tandem CCA addition to generate a CCACCA at the 3' terminus of unstable tRNAs. While stable tRNAs receive only 3'-terminal CCA, unstable tRNAs are marked with CCACCA and rapidly degraded. This Pyrobaculum neutrophilum (strain DSM 2338 / JCM 9278 / NBRC 100436 / V24Sta) (Thermoproteus neutrophilus) protein is CCA-adding enzyme.